The sequence spans 213 residues: dITP/XTP pyrophosphatase (213 aa).

17–22 (SNNAGK) contributes to the substrate binding site. Residues Glu-49 and Asp-78 each coordinate Mg(2+). Residue Asp-78 is the Proton acceptor of the active site. Substrate contacts are provided by residues Ser-79, 164–167 (FGYD), Lys-187, and 192–193 (HR).

Belongs to the HAM1 NTPase family. In terms of assembly, homodimer. The cofactor is Mg(2+).

The catalysed reaction is XTP + H2O = XMP + diphosphate + H(+). It catalyses the reaction dITP + H2O = dIMP + diphosphate + H(+). The enzyme catalyses ITP + H2O = IMP + diphosphate + H(+). In terms of biological role, pyrophosphatase that catalyzes the hydrolysis of nucleoside triphosphates to their monophosphate derivatives, with a high preference for the non-canonical purine nucleotides XTP (xanthosine triphosphate), dITP (deoxyinosine triphosphate) and ITP. Seems to function as a house-cleaning enzyme that removes non-canonical purine nucleotides from the nucleotide pool, thus preventing their incorporation into DNA/RNA and avoiding chromosomal lesions. In Bordetella bronchiseptica (strain ATCC BAA-588 / NCTC 13252 / RB50) (Alcaligenes bronchisepticus), this protein is dITP/XTP pyrophosphatase.